The chain runs to 155 residues: Ribosomal RNA large subunit methyltransferase H (155 aa).

Residues Leu72, Gly103, and 122-127 (LSTLTL) contribute to the S-adenosyl-L-methionine site.

This sequence belongs to the RNA methyltransferase RlmH family. As to quaternary structure, homodimer.

It localises to the cytoplasm. The enzyme catalyses pseudouridine(1915) in 23S rRNA + S-adenosyl-L-methionine = N(3)-methylpseudouridine(1915) in 23S rRNA + S-adenosyl-L-homocysteine + H(+). Specifically methylates the pseudouridine at position 1915 (m3Psi1915) in 23S rRNA. The protein is Ribosomal RNA large subunit methyltransferase H of Klebsiella pneumoniae (strain 342).